Reading from the N-terminus, the 184-residue chain is LPS-assembly lipoprotein LptE (184 aa).

The N-terminal stretch at 1–19 (MRHRLFTLVLGLAVLITAG) is a signal peptide. The N-palmitoyl cysteine moiety is linked to residue cysteine 20. Residue cysteine 20 is the site of S-diacylglycerol cysteine attachment.

The protein belongs to the LptE lipoprotein family. Component of the lipopolysaccharide transport and assembly complex. Interacts with LptD.

It is found in the cell outer membrane. Functionally, together with LptD, is involved in the assembly of lipopolysaccharide (LPS) at the surface of the outer membrane. Required for the proper assembly of LptD. Binds LPS and may serve as the LPS recognition site at the outer membrane. The polypeptide is LPS-assembly lipoprotein LptE (Pectobacterium atrosepticum (strain SCRI 1043 / ATCC BAA-672) (Erwinia carotovora subsp. atroseptica)).